The primary structure comprises 462 residues: Argininosuccinate lyase (462 aa).

The protein belongs to the lyase 1 family. Argininosuccinate lyase subfamily.

The protein resides in the cytoplasm. The catalysed reaction is 2-(N(omega)-L-arginino)succinate = fumarate + L-arginine. It participates in amino-acid biosynthesis; L-arginine biosynthesis; L-arginine from L-ornithine and carbamoyl phosphate: step 3/3. The chain is Argininosuccinate lyase from Ehrlichia ruminantium (strain Welgevonden).